The following is a 193-amino-acid chain: ATP-dependent Clp protease proteolytic subunit (193 aa).

The Nucleophile role is filled by serine 98. Residue histidine 123 is part of the active site.

This sequence belongs to the peptidase S14 family. As to quaternary structure, fourteen ClpP subunits assemble into 2 heptameric rings which stack back to back to give a disk-like structure with a central cavity, resembling the structure of eukaryotic proteasomes.

It localises to the cytoplasm. The catalysed reaction is Hydrolysis of proteins to small peptides in the presence of ATP and magnesium. alpha-casein is the usual test substrate. In the absence of ATP, only oligopeptides shorter than five residues are hydrolyzed (such as succinyl-Leu-Tyr-|-NHMec, and Leu-Tyr-Leu-|-Tyr-Trp, in which cleavage of the -Tyr-|-Leu- and -Tyr-|-Trp bonds also occurs).. In terms of biological role, cleaves peptides in various proteins in a process that requires ATP hydrolysis. Has a chymotrypsin-like activity. Plays a major role in the degradation of misfolded proteins. In Mannheimia succiniciproducens (strain KCTC 0769BP / MBEL55E), this protein is ATP-dependent Clp protease proteolytic subunit.